The following is a 626-amino-acid chain: tRNA 5-methylaminomethyl-2-thiouridine biosynthesis bifunctional protein MnmC (626 aa).

Residues 1–237 (MKGPQLDYAD…KRDMTVGVFQ (237 aa)) are tRNA (mnm(5)s(2)U34)-methyltransferase. The FAD-dependent cmnm(5)s(2)U34 oxidoreductase stretch occupies residues 255–626 (IGSGLSGANV…RVLPNRFSQE (372 aa)).

The protein in the N-terminal section; belongs to the methyltransferase superfamily. tRNA (mnm(5)s(2)U34)-methyltransferase family. It in the C-terminal section; belongs to the DAO family. Requires FAD as cofactor.

Its subcellular location is the cytoplasm. The catalysed reaction is 5-aminomethyl-2-thiouridine(34) in tRNA + S-adenosyl-L-methionine = 5-methylaminomethyl-2-thiouridine(34) in tRNA + S-adenosyl-L-homocysteine + H(+). In terms of biological role, catalyzes the last two steps in the biosynthesis of 5-methylaminomethyl-2-thiouridine (mnm(5)s(2)U) at the wobble position (U34) in tRNA. Catalyzes the FAD-dependent demodification of cmnm(5)s(2)U34 to nm(5)s(2)U34, followed by the transfer of a methyl group from S-adenosyl-L-methionine to nm(5)s(2)U34, to form mnm(5)s(2)U34. This is tRNA 5-methylaminomethyl-2-thiouridine biosynthesis bifunctional protein MnmC from Hahella chejuensis (strain KCTC 2396).